Here is a 605-residue protein sequence, read N- to C-terminus: MEHHKHDTFLGGIVKALGLVFGDIGTSPIYTLTVIFTLTQPTIDNVYGILSLIFWTMTILVSAEYAWLAMSLGRKGQGGEIVLREIIMKLVKAGRLVAFAGFLSFVGVSLLLGDAVITPAISILSAVEGLLLIPGLEGLSTGALVAIAAAIAIGLFSVQHKGTDRVASAFGPIMALWFGTLAVTGAVSAFSMPQIVEAINPLHGIAFFRDNGLAGYFVLSEVILCATGGEALYADMGHLGKRPIVRAWHFVFVALYLNYLGQGVFAIAHPDAKNLLFGMVRSQAPALYIPFLILTIMATIIASQAIISGVFSIVYQGITTRLLPLMRVDYTSRQIKSQIYLGAVNWSLMVAVIFIMLVFRKSENLAAAYGMAVTGSMTITGIMMIIVFSHTTKKWRALVALVVTLIAAAYHVSTFSKLPHGAYWSIILASIPFVTIIIWTRGQRTLYRALKPLDLETFLISYEQIYAKGPIRGTGLFFTRETDVVPPYVVHCIIRSNIIYERNVFISLMISDEPLGVETELIRGIGPGLDAFRIEAGYMEMVDIERLLKENGIQEKVIFYGVEDISTRNPFWRFFSVLKKLTPNFVQFHKLPASRLQGVVTRVEM.

Helical transmembrane passes span 16–36 (ALGLVFGDIGTSPIYTLTVIF), 49–69 (ILSLIFWTMTILVSAEYAWLA), 97–117 (VAFAGFLSFVGVSLLLGDAVI), 138–158 (GLSTGALVAIAAAIAIGLFSV), 170–190 (FGPIMALWFGTLAVTGAVSAF), 212–232 (GLAGYFVLSEVILCATGGEAL), 247–267 (AWHFVFVALYLNYLGQGVFAI), 287–307 (LYIPFLILTIMATIIASQAII), 339–359 (IYLGAVNWSLMVAVIFIMLVF), 368–388 (AYGMAVTGSMTITGIMMIIVF), 397–417 (ALVALVVTLIAAAYHVSTFSK), and 418–438 (LPHGAYWSIILASIPFVTIII).

The protein belongs to the HAK/KUP transporter (TC 2.A.72) family.

It is found in the cell inner membrane. The enzyme catalyses K(+)(in) + H(+)(in) = K(+)(out) + H(+)(out). Its function is as follows. Transport of potassium into the cell. Likely operates as a K(+):H(+) symporter. This Geobacter sulfurreducens (strain ATCC 51573 / DSM 12127 / PCA) protein is Probable potassium transport system protein Kup 3.